The primary structure comprises 726 residues: Catalase-peroxidase (726 aa).

Residues 1 to 33 (MSTSDDIHNTTATGKCPFHQGGHDQSAGAGTTT) form a disordered region. A cross-link (tryptophyl-tyrosyl-methioninium (Trp-Tyr) (with M-252)) is located at residues 105–226 (WHGAGTYRSI…LGATEMGLIY (122 aa)). The Proton acceptor role is filled by H106. The tryptophyl-tyrosyl-methioninium (Tyr-Met) (with W-105) cross-link spans 226–252 (YVNPEGPDHSGEPLSAAAAIRATFGNM). Heme b is bound at residue H267.

Belongs to the peroxidase family. Peroxidase/catalase subfamily. Homodimer or homotetramer. Heme b serves as cofactor. Formation of the three residue Trp-Tyr-Met cross-link is important for the catalase, but not the peroxidase activity of the enzyme.

It carries out the reaction H2O2 + AH2 = A + 2 H2O. It catalyses the reaction 2 H2O2 = O2 + 2 H2O. Bifunctional enzyme with both catalase and broad-spectrum peroxidase activity. This chain is Catalase-peroxidase, found in Shigella sonnei (strain Ss046).